We begin with the raw amino-acid sequence, 339 residues long: Probable N5-carboxyaminoimidazole ribonucleotide mutase (339 aa).

Substrate contacts are provided by Ser-11, Asp-14, and Arg-41.

This sequence belongs to the AIR carboxylase family. Class I subfamily.

The catalysed reaction is 5-carboxyamino-1-(5-phospho-D-ribosyl)imidazole + H(+) = 5-amino-1-(5-phospho-D-ribosyl)imidazole-4-carboxylate. Its pathway is purine metabolism; IMP biosynthesis via de novo pathway; 5-amino-1-(5-phospho-D-ribosyl)imidazole-4-carboxylate from 5-amino-1-(5-phospho-D-ribosyl)imidazole (N5-CAIR route): step 2/2. Catalyzes the conversion of N5-carboxyaminoimidazole ribonucleotide (N5-CAIR) to 4-carboxy-5-aminoimidazole ribonucleotide (CAIR). The polypeptide is Probable N5-carboxyaminoimidazole ribonucleotide mutase (Methanobrevibacter smithii).